The chain runs to 295 residues: uncharacterized protein (295 aa).

The Sigma-54 factor interaction domain occupies 4 to 233 (IVVKSMAMEK…LQNTIERLVL (230 aa)).

This is an uncharacterized protein from Pseudomonas sp. (strain NS671).